A 142-amino-acid polypeptide reads, in one-letter code: Hemoglobin A subunit alpha-2 (142 aa).

The Globin domain occupies 2–142; it reads VLTAGDKANV…VAQNLTSKYR (141 aa). An O2-binding site is contributed by histidine 59. A heme b-binding site is contributed by histidine 88.

This sequence belongs to the globin family. Tetramer of alpha-1, alpha-2 and two identical beta chains. Red blood cells.

Its function is as follows. Involved in oxygen transport from the lung to the various peripheral tissues. This Aldabrachelys gigantea (Aldabra giant tortoise) protein is Hemoglobin A subunit alpha-2.